Consider the following 510-residue polypeptide: ATP-dependent zinc metalloprotease FtsH 2 (510 aa).

Topologically, residues 1–4 (MKKN) are cytoplasmic. Residues 5 to 25 (LHIIILALSIFINLLFIYIFI) traverse the membrane as a helical segment. At 26–31 (SEVKPN) the chain is on the extracellular side. Residues 32–52 (LNLNLSFILTAAVIVVTYLLF) traverse the membrane as a helical segment. The Cytoplasmic portion of the chain corresponds to 53-510 (KNKFSELMPV…LWEEENTLCV (458 aa)). ATP is bound at residue 124–131 (GPPGTGKT). Zn(2+) is bound at residue histidine 343. The active site involves glutamate 344. Positions 347 and 418 each coordinate Zn(2+).

It in the central section; belongs to the AAA ATPase family. In the C-terminal section; belongs to the peptidase M41 family. In terms of assembly, homohexamer. Requires Zn(2+) as cofactor.

Its subcellular location is the cell membrane. In terms of biological role, acts as a processive, ATP-dependent zinc metallopeptidase for both cytoplasmic and membrane proteins. Plays a role in the quality control of integral membrane proteins. The chain is ATP-dependent zinc metalloprotease FtsH 2 from Thermoanaerobacter sp. (strain X514).